Consider the following 371-residue polypeptide: Anhydro-N-acetylmuramic acid kinase (371 aa).

Glycine 15–aspartate 22 provides a ligand contact to ATP.

The protein belongs to the anhydro-N-acetylmuramic acid kinase family.

The catalysed reaction is 1,6-anhydro-N-acetyl-beta-muramate + ATP + H2O = N-acetyl-D-muramate 6-phosphate + ADP + H(+). The protein operates within amino-sugar metabolism; 1,6-anhydro-N-acetylmuramate degradation. It participates in cell wall biogenesis; peptidoglycan recycling. In terms of biological role, catalyzes the specific phosphorylation of 1,6-anhydro-N-acetylmuramic acid (anhMurNAc) with the simultaneous cleavage of the 1,6-anhydro ring, generating MurNAc-6-P. Is required for the utilization of anhMurNAc either imported from the medium or derived from its own cell wall murein, and thus plays a role in cell wall recycling. This is Anhydro-N-acetylmuramic acid kinase from Cereibacter sphaeroides (strain ATCC 17023 / DSM 158 / JCM 6121 / CCUG 31486 / LMG 2827 / NBRC 12203 / NCIMB 8253 / ATH 2.4.1.) (Rhodobacter sphaeroides).